The sequence spans 475 residues: MDDKELFDRSIFEETNQLHLYDQLNYLKKNDLQKFRKLLNQVQQLDLRSLWLKYRNAKATSQENRKLSPSEVGPLSIVDTSDSSWWRTGLREIARGHVAALVLAGGQGTRLGFAGPKGCFRLGLPNNPSIFELQAQKIKKSLALARAAFPDQEASISIPWYIMVSECTSEETISFFKENDFFGIDKKDVFFFQQGVLPCLDISGRVLFESDSSLAWAPNGNGGIYEALLSSGALNDMNRRGILHITAYSVDNVLVLPVDPVFIGMATTKKLEVATKTVEKIDPAEKVGLLVSSHNHPCVVEYSEISDEACKATENVDGHKHLLLRAANIAYHYFSFDFLQKASLHSSTLPIHLACKKIPFYDVTSHHYTTPLNPNGYKLESFIFDLFPSVSVENFGCFQVPRRTSFSPLKNSSKSPNDNHETCVNDILSLGKSWILKNGGILSPSDCTYVSPECSLQGESLEWIKGKQVSNCKLY.

The Substrate binding motif lies at 103-106 (LAGG). UTP is bound by residues 103–106 (LAGG), lysine 117, glutamine 194, and glycine 220. Asparagine 221 is a substrate binding site. Aspartate 251 lines the UTP pocket. Residues 301 to 302 (EY) carry the Substrate binding motif. UTP is bound at residue lysine 378. Position 405 is a phosphoserine (serine 405). Position 410 (lysine 410) interacts with substrate.

It belongs to the UDPGP type 1 family.

The protein resides in the cytoplasm. Its subcellular location is the nucleus. The catalysed reaction is N-acetyl-alpha-D-glucosamine 1-phosphate + UTP + H(+) = UDP-N-acetyl-alpha-D-glucosamine + diphosphate. It participates in nucleotide-sugar biosynthesis; UDP-N-acetyl-alpha-D-glucosamine biosynthesis; UDP-N-acetyl-alpha-D-glucosamine from N-acetyl-alpha-D-glucosamine 1-phosphate: step 1/1. In Schizosaccharomyces pombe (strain 972 / ATCC 24843) (Fission yeast), this protein is Probable UDP-N-acetylglucosamine pyrophosphorylase (uap1).